The chain runs to 65 residues: Muscarinic m1-toxin2 (65 aa).

Cystine bridges form between Cys-3–Cys-24, Cys-17–Cys-42, Cys-46–Cys-57, and Cys-58–Cys-63.

It belongs to the three-finger toxin family. Short-chain subfamily. Aminergic toxin sub-subfamily. In terms of assembly, monomer. In terms of tissue distribution, expressed by the venom gland.

The protein localises to the secreted. Functionally, binds irreversibly and specifically to M1 (CHRM1) muscarinic acetylcholine receptors, blocking further binding of antagonists and preventing the action of agonists. The chain is Muscarinic m1-toxin2 from Dendroaspis angusticeps (Eastern green mamba).